Here is a 96-residue protein sequence, read N- to C-terminus: UPF0235 protein YggU (96 aa).

The protein belongs to the UPF0235 family.

The protein is UPF0235 protein YggU of Escherichia coli (strain K12 / MC4100 / BW2952).